The following is a 301-amino-acid chain: Sulfate adenylyltransferase subunit 2 (301 aa).

The segment at 279–301 is disordered; the sequence is RQGRLIDRDEAGSMEKKKREGYF.

The protein belongs to the PAPS reductase family. CysD subfamily. Heterodimer composed of CysD, the smaller subunit, and CysN.

The catalysed reaction is sulfate + ATP + H(+) = adenosine 5'-phosphosulfate + diphosphate. Its pathway is sulfur metabolism; hydrogen sulfide biosynthesis; sulfite from sulfate: step 1/3. Its function is as follows. With CysN forms the ATP sulfurylase (ATPS) that catalyzes the adenylation of sulfate producing adenosine 5'-phosphosulfate (APS) and diphosphate, the first enzymatic step in sulfur assimilation pathway. APS synthesis involves the formation of a high-energy phosphoric-sulfuric acid anhydride bond driven by GTP hydrolysis by CysN coupled to ATP hydrolysis by CysD. This is Sulfate adenylyltransferase subunit 2 from Mesorhizobium japonicum (strain LMG 29417 / CECT 9101 / MAFF 303099) (Mesorhizobium loti (strain MAFF 303099)).